Here is a 358-residue protein sequence, read N- to C-terminus: Cyclin-dependent kinase 10 (358 aa).

A Protein kinase domain is found at 37–321 (FEKLNRIGEG…AGDCLESSYF (285 aa)). ATP-binding positions include 43-51 (IGEGTYGIV) and K66. D161 functions as the Proton acceptor in the catalytic mechanism. Phosphothreonine is present on T194. The segment at 332 to 358 (LMPTFPHHRNKRAAPAATEGQSKRCRP) is disordered.

This sequence belongs to the protein kinase superfamily. CMGC Ser/Thr protein kinase family. CDC2/CDKX subfamily. As to quaternary structure, heterodimer with CCNQ, the interaction is required for kinase activity. Interacts with ETS2. Interacts with PRK2.

It localises to the cytoplasm. The protein resides in the cytoskeleton. It is found in the cilium basal body. It carries out the reaction L-seryl-[protein] + ATP = O-phospho-L-seryl-[protein] + ADP + H(+). The enzyme catalyses L-threonyl-[protein] + ATP = O-phospho-L-threonyl-[protein] + ADP + H(+). Functionally, cyclin-dependent kinase that phosphorylates the transcription factor ETS2 (in vitro) and positively controls its proteasomal degradation (in cells). Involved in the regulation of actin cytoskeleton organization through the phosphorylation of actin dynamics regulators such as PKN2. Is a negative regulator of ciliogenesis through phosphorylation of PKN2 and promotion of RhoA signaling. This is Cyclin-dependent kinase 10 (Cdk10) from Rattus norvegicus (Rat).